The primary structure comprises 75 residues: Large ribosomal subunit protein bL31 (75 aa).

The protein belongs to the bacterial ribosomal protein bL31 family. Type A subfamily. Part of the 50S ribosomal subunit.

Binds the 23S rRNA. The polypeptide is Large ribosomal subunit protein bL31 (Gluconobacter oxydans (strain 621H) (Gluconobacter suboxydans)).